The primary structure comprises 210 residues: Imidazoleglycerol-phosphate dehydratase (210 aa).

The protein belongs to the imidazoleglycerol-phosphate dehydratase family.

The protein resides in the cytoplasm. It carries out the reaction D-erythro-1-(imidazol-4-yl)glycerol 3-phosphate = 3-(imidazol-4-yl)-2-oxopropyl phosphate + H2O. Its pathway is amino-acid biosynthesis; L-histidine biosynthesis; L-histidine from 5-phospho-alpha-D-ribose 1-diphosphate: step 6/9. The protein is Imidazoleglycerol-phosphate dehydratase of Acidovorax ebreus (strain TPSY) (Diaphorobacter sp. (strain TPSY)).